The chain runs to 224 residues: Dehydration-responsive element-binding protein 1G (224 aa).

Positions Met1–Pro16 are enriched in polar residues. The interval Met1 to Lys46 is disordered. Positions Val54–Ala111 form a DNA-binding region, AP2/ERF.

The protein belongs to the AP2/ERF transcription factor family. ERF subfamily.

It is found in the nucleus. Functionally, transcriptional activator that binds specifically to the DNA sequence 5'-[AG]CCGAC-3'. Binding to the C-repeat/DRE element mediates high salinity- and dehydration-inducible transcription. The protein is Dehydration-responsive element-binding protein 1G (DREB1G) of Oryza sativa subsp. indica (Rice).